Consider the following 413-residue polypeptide: Histidine--tRNA ligase (413 aa).

This sequence belongs to the class-II aminoacyl-tRNA synthetase family. As to quaternary structure, homodimer.

The protein resides in the cytoplasm. It carries out the reaction tRNA(His) + L-histidine + ATP = L-histidyl-tRNA(His) + AMP + diphosphate + H(+). The sequence is that of Histidine--tRNA ligase (hisS) from Rickettsia prowazekii (strain Madrid E).